A 787-amino-acid chain; its full sequence is DNA ligase (787 aa).

NAD(+) contacts are provided by residues 32–36 (DVEYD), 81–82 (SL), and Glu-121. Residue Lys-123 is the N6-AMP-lysine intermediate of the active site. NAD(+) contacts are provided by Arg-144, Glu-181, Lys-297, and Lys-321. 4 residues coordinate Zn(2+): Cys-415, Cys-418, Cys-445, and Cys-451. A BRCT domain is found at 703 to 787 (VEGLPLAGQT…RLTELGVAVD (85 aa)).

This sequence belongs to the NAD-dependent DNA ligase family. LigA subfamily. It depends on Mg(2+) as a cofactor. The cofactor is Mn(2+).

It catalyses the reaction NAD(+) + (deoxyribonucleotide)n-3'-hydroxyl + 5'-phospho-(deoxyribonucleotide)m = (deoxyribonucleotide)n+m + AMP + beta-nicotinamide D-nucleotide.. In terms of biological role, DNA ligase that catalyzes the formation of phosphodiester linkages between 5'-phosphoryl and 3'-hydroxyl groups in double-stranded DNA using NAD as a coenzyme and as the energy source for the reaction. It is essential for DNA replication and repair of damaged DNA. In Pseudomonas savastanoi pv. phaseolicola (strain 1448A / Race 6) (Pseudomonas syringae pv. phaseolicola (strain 1448A / Race 6)), this protein is DNA ligase.